The sequence spans 98 residues: Signal peptidase complex subunit 1 (98 aa).

Over Met-1 to Arg-18 the chain is Cytoplasmic. Residues Trp-19–Val-38 traverse the membrane as a helical segment. At Gln-39–Ser-42 the chain is on the lumenal side. Residues Gln-43–Leu-65 traverse the membrane as a helical segment. The Cytoplasmic portion of the chain corresponds to Tyr-66 to Gln-98. The disordered stretch occupies residues Asp-78–Gln-98. Phosphoserine occurs at positions 84, 85, 86, and 88.

It belongs to the SPCS1 family. Component of the signal peptidase complex (SPC) composed of a catalytic subunit twr/SEC11 and three accessory subunits Spase12/SPCS1, Spase25/SPCS2 and Spase22-23/SPCS3. The complex induces a local thinning of the ER membrane which is used to measure the length of the signal peptide (SP) h-region of protein substrates. This ensures the selectivity of the complex towards h-regions shorter than 18-20 amino acids.

It localises to the endoplasmic reticulum membrane. In terms of biological role, component of the signal peptidase complex (SPC) which catalyzes the cleavage of N-terminal signal sequences from nascent proteins as they are translocated into the lumen of the endoplasmic reticulum. Dispensable for SPC enzymatic activity. Functionally, (Microbial infection) Plays an important role in infection by flaviviruses such as West Nile virus and Dengue virus type 2. In Drosophila melanogaster (Fruit fly), this protein is Signal peptidase complex subunit 1 (Spase12).